Consider the following 175-residue polypeptide: Chromobox protein homolog hpl-2 (175 aa).

In terms of domain architecture, Chromo spans 19 to 78 (FMVEKVLDKRTGKAGRDEFLIQWQGFPESDSSWEPRENLQCVEMLDEFEREFSKREKPIR). The interval 71-109 (SKREKPIRKRHSQKPEPSEDQADPEEDKDEKKETNQNDK) is disordered. Acidic residues predominate over residues 88-98 (SEDQADPEEDK). Basic and acidic residues predominate over residues 99–109 (DEKKETNQNDK). The Chromo 2; shadow subtype domain occupies 115-172 (KQLKCIVGLTKGPGELHFLCKFSDDTARLLPAKEVNSRYPSQVIRYYESKLTIQDPKA).

Interacts with histone H3 when di-, or tri-methylated at 'Lys-27' (H3K27me2/me3), or tri-methylated at 'Lys-9' (H3K9me3). Interacts with Tar DNA-binding protein homolog tdp-1; interaction may maintain localization of hpl-2 to gene bodies. Interacts with histone H1 his-24, probably via interaction with hpl-1. Interacts with chromobox protein homolog hpl-1. As to quaternary structure, may form homodimers. Interacts (via chromo (shadow subtype) domain) with zinc finger protein lin-13 (via PLVPV motif); the interaction is direct and influences localization of hpl-2 to nuclear foci.

It is found in the nucleus. The protein resides in the chromosome. Functionally, seems to be involved in transcriptional silencing in heterochromatin-like complexes. Probably does not act as global transcriptional repressor, instead targeting a subset of genes. Involved in RNA processing mediated by Tar DNA-binding protein homolog tdp-1. Plays a role in linking epigenetic regulation with the innate immune response. Involved in the endoplasmic reticulum (ER) stress response via modulation of the unfolded protein response (UPR), acting mainly through the IRE1-XBP1 pathway and perhaps, to a lesser extent, through the autophagy pathway. May act in a common pathway with retinoblastoma-like protein homolog lin-35 and zinc finger protein lin-13 to influence the ER stress response in the intestine. Plays a role in the formation of the vulva and in fertility, acting together with a CoREST-like complex, and chromobox protein homolog hpl-1. Acting in concert with hpl-1 and histone H1 protein his-24, involved in reproduction, somatic gonad development, male tail development and vulval cell fate specification; perhaps as a result of modulating expression of Hox genes mab-5 and egl-5. In vulval cell fate specification may act by repressing transcription, of EGF family gene lin-3 in hypodermal hyp7, and of homeobox lin-39 in vulval precursor cells (VPC). Role in growth and somatic gonad development is antagonized by histone-lysine N-methyltransferase set-2/SET1. Required for larval development, acting redundantly with hpl-1. Plays a role in regulation of the developmentally arrested larval state known as dauer, longevity, and lipid metabolism. This Caenorhabditis elegans protein is Chromobox protein homolog hpl-2.